The chain runs to 28 residues: Odorant-binding protein 1 (28 aa).

The protein belongs to the calycin superfamily. Lipocalin family. In terms of tissue distribution, nasal mucosa.

The protein resides in the secreted. The protein localises to the extracellular space. Its function is as follows. This soluble protein may play a specific role in odor discrimination and perception. The protein is Odorant-binding protein 1 of Hystrix cristata (North African crested porcupine).